A 72-amino-acid polypeptide reads, in one-letter code: LIGVKTEHGYLLDKYTGCKVWCVINNESCNGECKRRGGYYGYCYFWKLACFCQGARKSELWHYETNKCNGRM.

The N-terminal stretch at 1-5 is a signal peptide; it reads LIGVK. The LCN-type CS-alpha/beta domain maps to 7 to 69; it reads EHGYLLDKYT…LWHYETNKCN (63 aa). Disulfide bonds link C18–C68, C22–C43, C29–C50, and C33–C52.

In terms of tissue distribution, expressed by the venom gland.

It is found in the secreted. In terms of biological role, antimicrobial peptide with weak activity against both Gram-positive and -negative bacteria. Its antibiotic activity is potentiated by other antibacterial peptides such as Meucin-49. The protein is Antimicrobial peptide MeuNaTxbeta-4 of Mesobuthus eupeus (Lesser Asian scorpion).